We begin with the raw amino-acid sequence, 122 residues long: Small ribosomal subunit protein bS16 (122 aa).

Residues 87-122 (VGKAKQAEARKAGAKNVAKQAAEAKAEETPADNTEA) form a disordered region.

It belongs to the bacterial ribosomal protein bS16 family.

In Prochlorococcus marinus (strain MIT 9303), this protein is Small ribosomal subunit protein bS16.